The chain runs to 385 residues: Glucans biosynthesis protein C (385 aa).

10 helical membrane-spanning segments follow: residues 17–37 (AWLM…SHTW), 60–80 (MQVF…RYPL), 91–111 (VGIP…IMLQ), 137–157 (ISHL…VWIF), 173–193 (KFSM…YAVI), 212–232 (FIVM…LAFI), 239–259 (LFTT…VAYL), 274–294 (TESV…FSFG), 311–331 (ASLF…AYIT), and 338–358 (WLGF…LYEI).

It belongs to the acyltransferase 3 family. OpgC subfamily.

The protein localises to the cell membrane. It functions in the pathway glycan metabolism; osmoregulated periplasmic glucan (OPG) biosynthesis. Functionally, necessary for the succinyl substitution of periplasmic glucans. Could catalyze the transfer of succinyl residues from the cytoplasmic side of the membrane to the nascent glucan backbones on the periplasmic side of the membrane. The sequence is that of Glucans biosynthesis protein C from Escherichia coli O139:H28 (strain E24377A / ETEC).